The following is a 74-amino-acid chain: MDVAAAKALGAGISVIALAGVGLGIGNIFASLIASVARNPSSRDQVFSIGILGFALTEAVALFALLIAFLILFA.

The next 2 membrane-spanning stretches (helical) occupy residues 13–33 (ISVI…ASLI) and 51–71 (ILGF…AFLI).

It belongs to the ATPase C chain family. F-type ATPases have 2 components, F(1) - the catalytic core - and F(0) - the membrane proton channel. F(1) has five subunits: alpha(3), beta(3), gamma(1), delta(1), epsilon(1). F(0) has three main subunits: a(1), b(2) and c(10-14). The alpha and beta chains form an alternating ring which encloses part of the gamma chain. F(1) is attached to F(0) by a central stalk formed by the gamma and epsilon chains, while a peripheral stalk is formed by the delta and b chains.

It localises to the cell inner membrane. Functionally, f(1)F(0) ATP synthase produces ATP from ADP in the presence of a proton or sodium gradient. F-type ATPases consist of two structural domains, F(1) containing the extramembraneous catalytic core and F(0) containing the membrane proton channel, linked together by a central stalk and a peripheral stalk. During catalysis, ATP synthesis in the catalytic domain of F(1) is coupled via a rotary mechanism of the central stalk subunits to proton translocation. In terms of biological role, key component of the F(0) channel; it plays a direct role in translocation across the membrane. A homomeric c-ring of between 10-14 subunits forms the central stalk rotor element with the F(1) delta and epsilon subunits. The sequence is that of ATP synthase subunit c from Granulibacter bethesdensis (strain ATCC BAA-1260 / CGDNIH1).